The sequence spans 225 residues: Late embryogenesis abundant protein 29 (225 aa).

Disordered stretches follow at residues 1 to 167 and 193 to 225; these read MASN…GGFL and TEEE…YQRK. 4 stretches are compositionally biased toward basic and acidic residues: residues 28–39, 49–61, 71–83, and 93–119; these read MRDKAEEGRDKT, KAHE…KDKT, KAHE…KEKT, and KAHE…KDKA. LEA 11-mer repeat repeat units lie at residues 53–63, 75–85, and 97–107; these read TAQSAKDKTSQ, TAQSAKEKTSQ, and TTQAAKEKTSQ. The span at 141–153 shows a compositional bias: polar residues; sequence TKETAQGAAQYTK. Residues 154 to 163 show a composition bias toward basic and acidic residues; that stretch reads ETAEAGRDKT. Residues 205 to 225 are compositionally biased toward low complexity; the sequence is TTTTTATTRTTDPTHQTYQRK.

It belongs to the LEA type 4 family.

It is found in the cytoplasm. Its subcellular location is the cytosol. Functionally, involved dehydration tolerance. This chain is Late embryogenesis abundant protein 29, found in Arabidopsis thaliana (Mouse-ear cress).